The primary structure comprises 353 residues: Photosystem II D2 protein (353 aa).

At threonine 2 the chain carries N-acetylthreonine. At threonine 2 the chain carries Phosphothreonine. A helical membrane pass occupies residues 41–61 (CAYFALGGWFTGTTFVTSWYT). Histidine 118 provides a ligand contact to chlorophyll a. A helical membrane pass occupies residues 125 to 141 (GFMLRQFELARSVQLRP). Pheophytin a is bound by residues glutamine 130 and asparagine 143. The chain crosses the membrane as a helical span at residues 153-166 (VFVSVFLIYPLGQS). Histidine 198 contacts chlorophyll a. Residues 208 to 228 (AALLCAIHGATVENTLFEDGD) traverse the membrane as a helical segment. Residues histidine 215 and phenylalanine 262 each coordinate a plastoquinone. A Fe cation-binding site is contributed by histidine 215. Residue histidine 269 coordinates Fe cation. Residues 279-295 (GLWMSALGVVGLALNLR) traverse the membrane as a helical segment.

Belongs to the reaction center PufL/M/PsbA/D family. PSII is composed of 1 copy each of membrane proteins PsbA, PsbB, PsbC, PsbD, PsbE, PsbF, PsbH, PsbI, PsbJ, PsbK, PsbL, PsbM, PsbT, PsbX, PsbY, PsbZ, Psb30/Ycf12, at least 3 peripheral proteins of the oxygen-evolving complex and a large number of cofactors. It forms dimeric complexes. The D1/D2 heterodimer binds P680, chlorophylls that are the primary electron donor of PSII, and subsequent electron acceptors. It shares a non-heme iron and each subunit binds pheophytin, quinone, additional chlorophylls, carotenoids and lipids. There is also a Cl(-1) ion associated with D1 and D2, which is required for oxygen evolution. The PSII complex binds additional chlorophylls, carotenoids and specific lipids. serves as cofactor.

It is found in the plastid. It localises to the chloroplast thylakoid membrane. The enzyme catalyses 2 a plastoquinone + 4 hnu + 2 H2O = 2 a plastoquinol + O2. Functionally, photosystem II (PSII) is a light-driven water:plastoquinone oxidoreductase that uses light energy to abstract electrons from H(2)O, generating O(2) and a proton gradient subsequently used for ATP formation. It consists of a core antenna complex that captures photons, and an electron transfer chain that converts photonic excitation into a charge separation. The D1/D2 (PsbA/PsbD) reaction center heterodimer binds P680, the primary electron donor of PSII as well as several subsequent electron acceptors. D2 is needed for assembly of a stable PSII complex. The chain is Photosystem II D2 protein from Ceratophyllum demersum (Rigid hornwort).